The following is a 688-amino-acid chain: Soluble guanylate cyclase gcy-35 (688 aa).

His-105 provides a ligand contact to heme. Residues 358–401 (LNQSRMSQVELNRTLEETTKKLKKMAQELEIEKQKTDELLCELM) adopt a coiled-coil conformation. Positions 424-552 (TLLFTDIVTF…DTVNVANKME (129 aa)) constitute a Guanylate cyclase domain. Mg(2+) contacts are provided by Asp-429 and Asp-473. The segment at 644 to 688 (VENGNSAQNNHNNNNNTHHSGRKLMNGSSVDPGSHHIRSPTCTIS) is disordered. Residues 646 to 659 (NGNSAQNNHNNNNN) show a composition bias toward low complexity.

The protein belongs to the adenylyl cyclase class-4/guanylyl cyclase family. Heterodimer; heterodimerizes with gcy-36, and possibly with other soluble guanylate cyclases. Heme serves as cofactor. As to expression, expressed in URX, AQR and PQR neurons. Also expressed in ALN, SDQ and BDU neurons, and variably in AVM, PLM and PLN neurons, pharyngeal and body wall muscles, and the excretory cell.

It is found in the cytoplasm. The protein resides in the cell projection. Its subcellular location is the dendrite. The catalysed reaction is GTP = 3',5'-cyclic GMP + diphosphate. Its activity is regulated as follows. Regulated by molecular oxygen, which binds to the heme binding site. Probably not activated by nitric oxide (NO). Its function is as follows. Plays a central role in social feeding behavior and oxygen sensation by synthesizing 3',5'-cyclic guanosine monophosphate (cGMP) from GTP. Oxygen, which binds to its heme-binding sites, probably regulates social behavior by modulating its activity. cGMP is a common second messenger in sensory transduction and is implicated in oxygen sensation. Indeed, C.elegans exhibits a strong behavioral preference for 5-12% oxygen, avoiding higher and lower oxygen levels; a higher level of oxygen inducing a naturally polymorphic social feeding behavior. Involved in avoidance of hyperoxia and for oxygen-induced aggregation and bordering, probably by mediating oxygen-sensing in URX, AQR and PQR sensory neurons. The protein is Soluble guanylate cyclase gcy-35 (gcy-35) of Caenorhabditis elegans.